A 96-amino-acid polypeptide reads, in one-letter code: Co-chaperonin GroES (96 aa).

It belongs to the GroES chaperonin family. As to quaternary structure, heptamer of 7 subunits arranged in a ring. Interacts with the chaperonin GroEL.

It localises to the cytoplasm. Together with the chaperonin GroEL, plays an essential role in assisting protein folding. The GroEL-GroES system forms a nano-cage that allows encapsulation of the non-native substrate proteins and provides a physical environment optimized to promote and accelerate protein folding. GroES binds to the apical surface of the GroEL ring, thereby capping the opening of the GroEL channel. The polypeptide is Co-chaperonin GroES (Polynucleobacter asymbioticus (strain DSM 18221 / CIP 109841 / QLW-P1DMWA-1) (Polynucleobacter necessarius subsp. asymbioticus)).